A 633-amino-acid chain; its full sequence is Probable extracellular metalloproteinase 3 (633 aa).

A signal peptide spans 1 to 18 (MHGLLLAGLLALPMNVLA). Residues 19–246 (HPAEQHASNV…VHNVVDYVAS (228 aa)) constitute a propeptide that is removed on maturation. N410 carries an N-linked (GlcNAc...) asparagine glycan. H429 is a Zn(2+) binding site. E430 is an active-site residue. H433 serves as a coordination point for Zn(2+). N480 and N622 each carry an N-linked (GlcNAc...) asparagine glycan.

It belongs to the peptidase M36 family. Zn(2+) serves as cofactor.

Its subcellular location is the secreted. Secreted metalloproteinase probably acting as a virulence factor. This is Probable extracellular metalloproteinase 3 (MEP3) from Trichophyton verrucosum (strain HKI 0517).